A 191-amino-acid polypeptide reads, in one-letter code: Salivary lipocalin (191 aa).

Residues 1–16 form the signal peptide; that stretch reads MKLLLLLCLGLTLASS. A glycan (N-linked (GlcNAc...) asparagine) is linked at Asn69. Cysteines 84 and 176 form a disulfide.

This sequence belongs to the calycin superfamily. Lipocalin family. Homodimer. In the submaxillary salivary glands of mature male pigs, but absent from that of females. Expression was much lower in submaxillary glands of castrated male pigs than in sexually mature individuals.

It is found in the secreted. Its function is as follows. Binds pheromones, the pheromones are released from the saliva of males and affect the sexual behavior of females. The protein is Salivary lipocalin (SAL1) of Sus scrofa (Pig).